The following is a 282-amino-acid chain: 4-diphosphocytidyl-2-C-methyl-D-erythritol kinase (282 aa).

Residue K8 is part of the active site. An ATP-binding site is contributed by 91-101; sequence PVAAGLAGGST. The active site involves D133.

It belongs to the GHMP kinase family. IspE subfamily.

It carries out the reaction 4-CDP-2-C-methyl-D-erythritol + ATP = 4-CDP-2-C-methyl-D-erythritol 2-phosphate + ADP + H(+). Its pathway is isoprenoid biosynthesis; isopentenyl diphosphate biosynthesis via DXP pathway; isopentenyl diphosphate from 1-deoxy-D-xylulose 5-phosphate: step 3/6. In terms of biological role, catalyzes the phosphorylation of the position 2 hydroxy group of 4-diphosphocytidyl-2C-methyl-D-erythritol. The protein is 4-diphosphocytidyl-2-C-methyl-D-erythritol kinase of Symbiobacterium thermophilum (strain DSM 24528 / JCM 14929 / IAM 14863 / T).